Consider the following 302-residue polypeptide: RNA polymerase II holoenzyme cyclin-like subunit (302 aa).

In terms of domain architecture, Cyclin N-terminal spans 53–142 (QQLIKLGKRM…LGECEFSLIS (90 aa)).

It belongs to the cyclin family. Cyclin C subfamily. Component of the srb8-11 complex, a regulatory module of the Mediator complex.

It localises to the nucleus. Component of the srb8-11 complex. The srb8-11 complex is a regulatory module of the Mediator complex which is itself involved in regulation of basal and activated RNA polymerase II-dependent transcription. The srb8-11 complex may be involved in the transcriptional repression of a subset of genes regulated by Mediator. It may inhibit the association of the Mediator complex with RNA polymerase II to form the holoenzyme complex. The srb8-11 complex phosphorylates the C-terminal domain (CTD) of the largest subunit of RNA polymerase II. The polypeptide is RNA polymerase II holoenzyme cyclin-like subunit (ssn8) (Aspergillus fumigatus (strain ATCC MYA-4609 / CBS 101355 / FGSC A1100 / Af293) (Neosartorya fumigata)).